Here is a 353-residue protein sequence, read N- to C-terminus: sn-glycerol-3-phosphate import ATP-binding protein UgpC 3 (353 aa).

The ABC transporter domain occupies 4-235; that stretch reads IALKDVRKVY…PATTFVATFI (232 aa). An ATP-binding site is contributed by 37-44; the sequence is GPSGCGKS.

This sequence belongs to the ABC transporter superfamily. sn-glycerol-3-phosphate importer (TC 3.A.1.1.3) family. The complex is composed of two ATP-binding proteins (UgpC), two transmembrane proteins (UgpA and UgpE) and a solute-binding protein (UgpB).

Its subcellular location is the cell inner membrane. The catalysed reaction is sn-glycerol 3-phosphate(out) + ATP + H2O = sn-glycerol 3-phosphate(in) + ADP + phosphate + H(+). Functionally, part of the ABC transporter complex UgpBAEC involved in sn-glycerol-3-phosphate (G3P) import. Responsible for energy coupling to the transport system. This chain is sn-glycerol-3-phosphate import ATP-binding protein UgpC 3, found in Agrobacterium fabrum (strain C58 / ATCC 33970) (Agrobacterium tumefaciens (strain C58)).